A 405-amino-acid chain; its full sequence is Argininosuccinate synthase (405 aa).

ATP contacts are provided by residues 10–18 (AYSGGLDTS) and A37. L-citrulline contacts are provided by Y88 and S93. G118 provides a ligand contact to ATP. Positions 120, 124, and 125 each coordinate L-aspartate. An L-citrulline-binding site is contributed by N124. Residues R128, S179, S188, E264, and Y276 each contribute to the L-citrulline site.

Belongs to the argininosuccinate synthase family. Type 1 subfamily. In terms of assembly, homotetramer.

It is found in the cytoplasm. The enzyme catalyses L-citrulline + L-aspartate + ATP = 2-(N(omega)-L-arginino)succinate + AMP + diphosphate + H(+). Its pathway is amino-acid biosynthesis; L-arginine biosynthesis; L-arginine from L-ornithine and carbamoyl phosphate: step 2/3. The protein is Argininosuccinate synthase of Ectopseudomonas mendocina (strain ymp) (Pseudomonas mendocina).